We begin with the raw amino-acid sequence, 237 residues long: Tyrosine-protein kinase YwqD (237 aa).

Tyr228 carries the post-translational modification Phosphotyrosine; by autocatalysis.

It belongs to the CpsD/CapB family. In terms of processing, autophosphorylated in vitro, which inhibits ATPase activity. Dephosphorylated by YwqE in vitro.

The catalysed reaction is L-tyrosyl-[protein] + ATP = O-phospho-L-tyrosyl-[protein] + ADP + H(+). Its function is as follows. May be involved in the regulation of capsular polysaccharide biosynthesis. Autophosphorylates in vitro. Phosphorylates and activates in vitro two UDP-glucose dehydrogenases, YwqF and TuaD, as well as the DNA-binding proteins Ssb and SsbB. The protein is Tyrosine-protein kinase YwqD (ywqD) of Bacillus subtilis (strain 168).